Consider the following 433-residue polypeptide: uncharacterized protein (433 aa).

A Radical SAM core domain is found at 104–349 (ERGRNIIQVR…ELEYKKKGIE (246 aa)). [4Fe-4S] cluster-binding residues include Cys-118, Cys-122, and Cys-125. S-adenosyl-L-methionine-binding positions include 171 to 172 (GE) and 236 to 238 (MLS). Positions 370–433 (PFKVGEVTKV…KDNIIVAELV (64 aa)) constitute a TRAM domain.

This sequence belongs to the radical SAM superfamily. Requires [4Fe-4S] cluster as cofactor.

This is an uncharacterized protein from Methanocaldococcus jannaschii (strain ATCC 43067 / DSM 2661 / JAL-1 / JCM 10045 / NBRC 100440) (Methanococcus jannaschii).